The primary structure comprises 529 residues: Bifunctional purine biosynthesis protein PurH (529 aa).

Residues 1–148 (MQQRRPVRRA…KNHKDVAIVV (148 aa)) enclose the MGS-like domain.

The protein belongs to the PurH family.

It catalyses the reaction (6R)-10-formyltetrahydrofolate + 5-amino-1-(5-phospho-beta-D-ribosyl)imidazole-4-carboxamide = 5-formamido-1-(5-phospho-D-ribosyl)imidazole-4-carboxamide + (6S)-5,6,7,8-tetrahydrofolate. The enzyme catalyses IMP + H2O = 5-formamido-1-(5-phospho-D-ribosyl)imidazole-4-carboxamide. It functions in the pathway purine metabolism; IMP biosynthesis via de novo pathway; 5-formamido-1-(5-phospho-D-ribosyl)imidazole-4-carboxamide from 5-amino-1-(5-phospho-D-ribosyl)imidazole-4-carboxamide (10-formyl THF route): step 1/1. The protein operates within purine metabolism; IMP biosynthesis via de novo pathway; IMP from 5-formamido-1-(5-phospho-D-ribosyl)imidazole-4-carboxamide: step 1/1. This chain is Bifunctional purine biosynthesis protein PurH, found in Salmonella paratyphi C (strain RKS4594).